We begin with the raw amino-acid sequence, 443 residues long: Phosphomevalonate kinase ERG8 (443 aa).

ATP is bound at residue 160 to 170 (ANKTGLGSSAA).

Belongs to the GHMP kinase family. Mevalonate kinase subfamily.

The enzyme catalyses (R)-5-phosphomevalonate + ATP = (R)-5-diphosphomevalonate + ADP. It participates in isoprenoid biosynthesis; isopentenyl diphosphate biosynthesis via mevalonate pathway; isopentenyl diphosphate from (R)-mevalonate: step 2/3. Phosphomevalonate kinase; part of the second module of ergosterol biosynthesis pathway that includes the middle steps of the pathway. ERG8 converts 5-phosphomevalonate to 5-diphosphomevalonate. The second module is carried out in the vacuole and involves the formation of farnesyl diphosphate, which is also an important intermediate in the biosynthesis of ubiquinone, dolichol, heme and prenylated proteins. Activity by the mevalonate kinase ERG12 (FG05912) first converts mevalonate into 5-phosphomevalonate. 5-phosphomevalonate is then further converted to 5-diphosphomevalonate by the phosphomevalonate kinase ERG8 (FG09764). The diphosphomevalonate decarboxylase ERG19 (FG10424) then produces isopentenyl diphosphate. The isopentenyl-diphosphate delta-isomerase IDI1 (FG09722) then catalyzes the 1,3-allylic rearrangement of the homoallylic substrate isopentenyl (IPP) to its highly electrophilic allylic isomer, dimethylallyl diphosphate (DMAPP). Finally the farnesyl diphosphate synthase ERG20 (FG06784) catalyzes the sequential condensation of isopentenyl pyrophosphate with dimethylallyl pyrophosphate, and then with the resultant geranylpyrophosphate to the ultimate product farnesyl pyrophosphate. In Gibberella zeae (strain ATCC MYA-4620 / CBS 123657 / FGSC 9075 / NRRL 31084 / PH-1) (Wheat head blight fungus), this protein is Phosphomevalonate kinase ERG8.